Here is a 530-residue protein sequence, read N- to C-terminus: Proline--tRNA ligase, cytoplasmic (530 aa).

Belongs to the class-II aminoacyl-tRNA synthetase family.

Its subcellular location is the cytoplasm. The protein resides in the cytosol. It catalyses the reaction tRNA(Pro) + L-proline + ATP = L-prolyl-tRNA(Pro) + AMP + diphosphate. Its function is as follows. Catalyzes the attachment of proline to tRNA(Pro) in a two-step reaction: proline is first activated by ATP to form Pro-AMP and then transferred to the acceptor end of tRNA(Pro). The protein is Proline--tRNA ligase, cytoplasmic of Arabidopsis thaliana (Mouse-ear cress).